Consider the following 423-residue polypeptide: Phthiocerol/phthiodiolone dimycocerosyl transferase (423 aa).

His-125 acts as the Proton acceptor in catalysis.

The protein belongs to the acyltransferase PapA5 family. In terms of assembly, monomer. Interacts directly with the acyl carrier protein (ACP) domain of the mycocerosic acid synthase (mas) protein.

It catalyses the reaction 2 a mycocerosyl-[mycocerosic acid synthase] + a phthiocerol = a dimycocerosyl phthiocerol + 2 holo-[mycocerosic acid synthase].. The enzyme catalyses 2 a mycocerosyl-[mycocerosic acid synthase] + a phthiodiolone = a dimycocerosyl phthiodiolone + 2 holo-[mycocerosic acid synthase].. The catalysed reaction is 2 a mycocerosyl-[mycocerosic acid synthase] + a phenolphthiocerol = a dimycocerosyl phenolphthiocerol + 2 holo-[mycocerosic acid synthase].. Functionally, catalyzes diesterification of phthiocerol, phthiodiolone, and phenolphthiocerol with mycocerosic acids, the final step in the phthiocerol, phthiodiolone and phenolphthiocerol dimycocerosate esters (PDIM) synthesis. Can directly transfer the mycocerosate bound to the mycocerosic acid synthase (mas) onto the substrate alcohols. The chain is Phthiocerol/phthiodiolone dimycocerosyl transferase (papA5) from Mycobacterium leprae (strain TN).